We begin with the raw amino-acid sequence, 166 residues long: Protein BioX (166 aa).

Transmembrane regions (helical) follow at residues 12-32 (ISLL…TGIP), 33-53 (GSEF…FGFK), 55-75 (YFLA…HSIL), 87-107 (VGLI…AGPI), and 117-137 (AFTL…GMVI).

The protein resides in the cell membrane. Functionally, does not seem to be a permease of pimelate. Its role in biotin synthesis is not clear. This is Protein BioX (bioX) from Lysinibacillus sphaericus (Bacillus sphaericus).